Here is a 332-residue protein sequence, read N- to C-terminus: Endo-1,4-beta-xylanase B (332 aa).

The 330-residue stretch at 2–331 folds into the GH10 domain; it reads STEIPSLSAS…KDSFWRIIGQ (330 aa). E134 functions as the Proton donor in the catalytic mechanism. Residue E241 is the Nucleophile of the active site.

The protein belongs to the glycosyl hydrolase 10 (cellulase F) family. Cytoplasmic xylanase subfamily.

The protein resides in the cytoplasm. It carries out the reaction Endohydrolysis of (1-&gt;4)-beta-D-xylosidic linkages in xylans.. It functions in the pathway glycan degradation; xylan degradation. Its activity is regulated as follows. Completely inhibited by Ag(2+), Cu(2+), Hg(2+), Mn(2+), Pb(2+) and Sn(2+). Strongly inhibited by Fe(2+) and Zn(2+). Co(2+) and Ni(2+) cause little inhibition while Ca(2+) and Mg(2+) do not affect enzyme activity, and Ba(2+) produces a small stimulating effect. Irreversibly inactivated by SDS in vitro. Its function is as follows. Plays a role in plant xylan biodegradation, probably via the hydrolysis of short xylooligosaccharides resulting from extracellular xylan hydrolysis, once they have been transported inside cells. Shows similar activity on xylans of different rate of arabinose or methylglucuronic substitution. Also displays high activity on aryl-xylosides. Is active on xylotetraose and xylotriose, but does not hydrolyze xylobiose, indicating that XynB is a xylanase and not a beta-xylosidase. The chain is Endo-1,4-beta-xylanase B (xynB) from Paenibacillus barcinonensis.